Reading from the N-terminus, the 224-residue chain is MWGSRIAVALRILVVLAILPVFLLLVYSLPFVRPVSTLMVKDYALLQGVNRQWVDIENIAPVLVNSVMMAEDGQFCSHGGVDWHQLGLVLDDAGDGGPSRGASTITMQMVKNLFLWNGRSYLRKGLEFPLALIADAVLSRKRIMEIYLNIAEWGPGIYGIEAAARHYFKRSAAKLTARQAALLAVTLPNPALRNPAKPTRNMQRIARIVAGRAMRSGPYVTCVK.

The chain crosses the membrane as a helical span at residues 12–32 (ILVVLAILPVFLLLVYSLPFV).

It belongs to the glycosyltransferase 51 family.

The protein resides in the cell inner membrane. It catalyses the reaction [GlcNAc-(1-&gt;4)-Mur2Ac(oyl-L-Ala-gamma-D-Glu-L-Lys-D-Ala-D-Ala)](n)-di-trans,octa-cis-undecaprenyl diphosphate + beta-D-GlcNAc-(1-&gt;4)-Mur2Ac(oyl-L-Ala-gamma-D-Glu-L-Lys-D-Ala-D-Ala)-di-trans,octa-cis-undecaprenyl diphosphate = [GlcNAc-(1-&gt;4)-Mur2Ac(oyl-L-Ala-gamma-D-Glu-L-Lys-D-Ala-D-Ala)](n+1)-di-trans,octa-cis-undecaprenyl diphosphate + di-trans,octa-cis-undecaprenyl diphosphate + H(+). The protein operates within cell wall biogenesis; peptidoglycan biosynthesis. Peptidoglycan polymerase that catalyzes glycan chain elongation from lipid-linked precursors. The chain is Biosynthetic peptidoglycan transglycosylase from Brucella melitensis biotype 1 (strain ATCC 23456 / CCUG 17765 / NCTC 10094 / 16M).